The following is a 119-amino-acid chain: uncharacterized protein (119 aa).

This is an uncharacterized protein from Escherichia coli (Bacteriophage T4).